The following is a 1771-amino-acid chain: Kinase D-interacting substrate of 220 kDa (1771 aa).

Topologically, residues 1–499 (MSVLISQSVI…QIEPLFQFSW (499 aa)) are cytoplasmic. ANK repeat units lie at residues 4–33 (LISQSVINYVEEENIPALKALLEKCKDVDE), 37–66 (CGQTPLMIAAEQGNLEIVKELIKNGANCNL), 70–99 (DNWTALISASKEGHVHIVEELLKCGVNLEH), 103–132 (GGWTALMWACYKGRTDVVELLLSHGANPSV), 136–165 (YSVYPIIWAAGRGHADIVHLLLQNGAKVNC), 169–198 (YGTTPLVWAARKGHLECVKHLLAMGADVDQ), 202–231 (NSMTALIVAVKGGYTQSVKEILKRNPNVNL), 235–264 (DGNTALMIASKEGHTEIVQDLLDAGTYVNI), 268–297 (SGDTVLIGAVRGGHVEIVRALLQKYADIDI), 301–330 (DNKTALYWAVEKGNATMVRDILQCNPDTEI), 334–363 (DGETPLIKATKMRNIEVVELLLDKGAKVSA), and 367–396 (KGDTPLHIAIRGRSRKLAELLLRNPKDGRL). Residues 440-953 (YDLYSSALAD…NIVSVTGRLL (514 aa)) enclose the KAP NTPase domain. The helical transmembrane segment at 500 to 520 (LIVFLTLLLCGGLGLLFAFTV) threads the bilayer. Topologically, residues 521–524 (HPNL) are extracellular. The chain crosses the membrane as a helical span at residues 525 to 545 (GIAVSLSFLALLYIFFIVIYF). Topologically, residues 546–659 (GGRREGESWN…KWKKTCCLPS (114 aa)) are cytoplasmic. The helical transmembrane segment at 660–680 (FVIFLFIIGCIISGITLLAIF) threads the bilayer. Over 681-685 (RVDPK) the chain is Extracellular. Residues 686–706 (HLTVNAVLISIASVVGLAFVL) form a helical membrane-spanning segment. At 707 to 1771 (NCRTWWQVLD…GFGEERESIL (1065 aa)) the chain is on the cytoplasmic side. 2 positions are modified to phosphoserine: S882 and S885. T914 carries the phosphothreonine modification. Position 918 is a phosphoserine (S918). A mediates interaction with CRKL region spans residues 1089-1092 (PRAP). S1163 carries the post-translational modification Phosphoserine. Disordered stretches follow at residues 1182-1202 (DAAEGLSSPTDSSRGSGPAPG), 1285-1310 (PEDPRFLSESSSGPAPHGEPARRASH), 1344-1368 (RHSNLSWQSQTRRTPSLSSLNSQDS), and 1397-1564 (LEGG…EPIR). A phosphoserine mark is found at S1296, S1352, S1359, S1361, S1362, and S1365. The segment covering 1346 to 1358 (SNLSWQSQTRRTP) has biased composition (polar residues). Residues 1359 to 1368 (SLSSLNSQDS) are compositionally biased toward low complexity. The segment covering 1403 to 1430 (STTISGRSSPHSTYYMGQSSSGGSIHSN) has biased composition (polar residues). Residues 1431-1457 (LEQEKGKDSEPKPDDGRKSFLMKRGDV) are compositionally biased toward basic and acidic residues. A compositionally biased stretch (polar residues) spans 1460-1470 (YSSSGVSTNDA). Residues S1521, S1526, S1555, and S1574 each carry the phosphoserine modification. Over residues 1522-1532 (DEDESGTEESD) the composition is skewed to acidic residues. Basic and acidic residues predominate over residues 1537-1561 (LKDDKDRKAEGKVERVPKSPEHSAE). The interval 1578 to 1633 (LDKKDSSDSGVRSSESSPNHSLHNEVADDSQLEKANLIELEDDSHSGKRGIPHSLS) is disordered. Positions 1585–1594 (DSGVRSSESS) are enriched in low complexity. Phosphoserine is present on residues S1623 and S1633. T1679 bears the Phosphothreonine mark. S1681 carries the post-translational modification Phosphoserine. The residue at position 1684 (T1684) is a Phosphothreonine. Residues 1713-1731 (LRPSSSPNPTTIQNENLKS) show a composition bias toward polar residues. A disordered region spans residues 1713–1771 (LRPSSSPNPTTIQNENLKSMTHKRSQRSSYTRLSKDPPELHAAASSESTGFGEERESIL). Positions 1766-1771 (ERESIL) match the PDZ-binding motif.

Found in a complex, at least composed of KIDINS220, MAGI2, NTRK1 and RAPGEF2; the complex is mainly formed at late endosomes in a nerve growth factor (NGF)-dependent manner. Interacts with RAPGEF2; the interaction is strengthened after NGF stimulation. Isoform 2 interacts (via C-terminal domain) with MAGI2 isoform 1 (via PDZ domain). Interacts with NTRK1, NTRK2, NTRK3, ERKL and NGFR. Can form a ternary complex with NGFR and NTRK1 and this complex is affected by the expression levels of KIDINS220/ARMS. An increase in KIDINS220/ARMS expression leads to a decreased association of NGFR and NTRK1. Interacts (via PDZ-binding motif) with SNTA1 and SNTB2 (via PDZ domains). Interacts with EPHA4 and PRKD1. In terms of processing, tyrosine phosphorylated by NTRK1, NTRK2, EPHB2 and EPHA4. Phosphorylation at Ser-918 is induced by phorbol ester treatment. Phosphorylation by NTRK2 is induced by brain-derived neurotrophic factor (BDNF) and neurotrophin-4/5. Phosphorylation by NTRK1 is induced by nerve growth factor (NGF). Abundant in developing and adult neural tissues as well as neuroendocrine cells and dendritic cells. Overexpressed in melanoma and melanoma cell lines.

The protein localises to the membrane. It localises to the late endosome. Promotes a prolonged MAP-kinase signaling by neurotrophins through activation of a Rap1-dependent mechanism. Provides a docking site for the CRKL-C3G complex, resulting in Rap1-dependent sustained ERK activation. May play an important role in regulating postsynaptic signal transduction through the syntrophin-mediated localization of receptor tyrosine kinases such as EPHA4. In cooperation with SNTA1 can enhance EPHA4-induced JAK/STAT activation. Plays a role in nerve growth factor (NGF)-induced recruitment of RAPGEF2 to late endosomes and neurite outgrowth. May play a role in neurotrophin- and ephrin-mediated neuronal outgrowth and in axon guidance during neural development and in neuronal regeneration. Modulates stress-induced apoptosis of melanoma cells via regulation of the MEK/ERK signaling pathway. The polypeptide is Kinase D-interacting substrate of 220 kDa (KIDINS220) (Homo sapiens (Human)).